A 451-amino-acid polypeptide reads, in one-letter code: UDP-N-acetylmuramoylalanine--D-glutamate ligase (451 aa).

Residue 118–124 (GSNGKTT) coordinates ATP.

The protein belongs to the MurCDEF family.

The protein resides in the cytoplasm. The enzyme catalyses UDP-N-acetyl-alpha-D-muramoyl-L-alanine + D-glutamate + ATP = UDP-N-acetyl-alpha-D-muramoyl-L-alanyl-D-glutamate + ADP + phosphate + H(+). It functions in the pathway cell wall biogenesis; peptidoglycan biosynthesis. Cell wall formation. Catalyzes the addition of glutamate to the nucleotide precursor UDP-N-acetylmuramoyl-L-alanine (UMA). The protein is UDP-N-acetylmuramoylalanine--D-glutamate ligase of Shouchella clausii (strain KSM-K16) (Alkalihalobacillus clausii).